Consider the following 401-residue polypeptide: Beta-ketoadipyl-CoA thiolase (401 aa).

Residue Cys-90 is the Acyl-thioester intermediate of the active site. Residues His-357 and Cys-387 each act as proton acceptor in the active site.

This sequence belongs to the thiolase-like superfamily. Thiolase family.

The catalysed reaction is succinyl-CoA + acetyl-CoA = 3-oxoadipyl-CoA + CoA. The protein operates within aromatic compound metabolism; beta-ketoadipate pathway; acetyl-CoA and succinyl-CoA from 3-oxoadipate: step 2/2. Catalyzes thiolytic cleavage of beta-ketoadipyl-CoA to succinyl-CoA and acetyl-CoA. In Acinetobacter baylyi (strain ATCC 33305 / BD413 / ADP1), this protein is Beta-ketoadipyl-CoA thiolase (pcaF).